The primary structure comprises 293 residues: DNA-directed RNA polymerase III subunit RPC6 (293 aa).

This sequence belongs to the eukaryotic RPC34/RPC39 RNA polymerase subunit family. In terms of assembly, component of the RNA polymerase III (Pol III) complex consisting of 17 subunits.

The protein localises to the nucleus. Its function is as follows. DNA-dependent RNA polymerase catalyzes the transcription of DNA into RNA using the four ribonucleoside triphosphates as substrates. Specific peripheric component of RNA polymerase III which synthesizes small RNAs, such as 5S rRNA and tRNAs. The polypeptide is DNA-directed RNA polymerase III subunit RPC6 (Drosophila melanogaster (Fruit fly)).